Reading from the N-terminus, the 186-residue chain is Hydra actinoporin-like toxin 1 (186 aa).

An N-terminal signal peptide occupies residues Met1 to Ala18. An N-terminal region region spans residues Lys29–Val48. Residues Arg158–Gly160 carry the Cell attachment site, crucial for protein stability motif.

The protein belongs to the actinoporin family. HALT subfamily. In terms of assembly, octamer or nonamer in membranes. Monomer in the soluble state. In vitro, interacts with folate receptor alpha (of target organism). Expressed female germline during oogenesis.

The protein localises to the nematocyst. The protein resides in the secreted. Its subcellular location is the target cell membrane. Its function is as follows. Pore-forming protein that forms hydrophilic pores and causes cytolysis. Compared to equinatoxin-2 (AC P61914), it reveals lower cytolysis activity (5-12-fold difference, tested on erythrocytes), a larger pore size (probably 2-3 nm) and different affinity to membrane lipids (100-fold lower affinity to sphingomyelin). Binds to sulfatides (SFT) as well as to the two sphingolipids, lysophosphatidic acid (LPA) and sphingosine-1-phosphate (S1P). It seems to bind more strongly to LPA than to S1P and SFT. Shows cytolytic activity on HeLa cells, with a different potency than its paralogs (from most potent to less potent: HALT-4&gt;HALT-6~HALT-1&gt;HALT-3&gt;HALT-7&gt;HALT-2). Pore formation is a multi-step process that involves specific recognition of membrane lipid by a protein aromatic residues rich region, firm binding to the membrane (mainly driven by hydrophobic interactions) accompanied by the transfer of the N-terminal region to the lipid-water interface and finally pore formation after oligomerization of monomers. In vitro, binds to the folate receptor alpha (FOLR1), a GPI-anchored membrane protein that plays a major role in the uptake of folate/folic acid into cells via endocytosis, suggesting a possible involvement of this receptor in the mechanism of HALT-1-induced cell lysis. In vivo, does not cause visible paralysis in larvae of the blowfly Sarcophaga faculata, the most common arthropod prey of Hydra. The chain is Hydra actinoporin-like toxin 1 from Hydra vulgaris (Hydra).